The primary structure comprises 393 residues: uncharacterized protein (393 aa).

The B box-type zinc finger occupies 6–47 (KYDNKCAIHKEHKIKMICATCKDVVCNECILLDHNGHKFGRI). The Zn(2+) site is built by cysteine 11, histidine 14, cysteine 34, and histidine 39.

This is an uncharacterized protein from Dictyostelium discoideum (Social amoeba).